Reading from the N-terminus, the 800-residue chain is Phenylalanine--tRNA ligase beta subunit (800 aa).

Residues 39–154 (TKDIKNLVVG…ESQVPGTDAL (116 aa)) form the tRNA-binding domain. Residues 408–483 (AFITPIDITA…RIYGYDDIPS (76 aa)) form the B5 domain. Positions 461, 467, 470, and 471 each coordinate Mg(2+). The region spanning 708 to 800 (PRFPGMSRDI…ALIEQGAVIR (93 aa)) is the FDX-ACB domain.

The protein belongs to the phenylalanyl-tRNA synthetase beta subunit family. Type 1 subfamily. In terms of assembly, tetramer of two alpha and two beta subunits. Requires Mg(2+) as cofactor.

The protein resides in the cytoplasm. The catalysed reaction is tRNA(Phe) + L-phenylalanine + ATP = L-phenylalanyl-tRNA(Phe) + AMP + diphosphate + H(+). The chain is Phenylalanine--tRNA ligase beta subunit from Staphylococcus aureus.